A 37-amino-acid chain; its full sequence is Mu-agatoxin-Aa1d (37 aa).

4 disulfides stabilise this stretch: cysteine 2/cysteine 18, cysteine 9/cysteine 23, cysteine 17/cysteine 33, and cysteine 25/cysteine 31. Asparagine 37 carries the post-translational modification Asparagine amide.

Belongs to the neurotoxin 07 (Beta/delta-agtx) family. 03 (aga-4) subfamily. Aga sub-subfamily. In terms of tissue distribution, expressed by the venom gland.

Its subcellular location is the secreted. Insecticidal neurotoxin that induces an irreversible spastic paralysis when injected into insects. Modifies presynaptic voltage-gated sodium channels (Nav), causing them to open at the normal resting potential of the nerve. This leads to spontaneous release of neurotransmitter and repetitive action potentials in motor neurons. This chain is Mu-agatoxin-Aa1d, found in Agelenopsis aperta (North American funnel-web spider).